Here is a 458-residue protein sequence, read N- to C-terminus: Serine--tRNA ligase (458 aa).

An L-serine-binding site is contributed by 255–257 (TSE). Residues 286-288 (RKE) and Val302 each bind ATP. Position 309 (Glu309) interacts with L-serine. Residue 373–376 (ELVS) coordinates ATP. Thr409 is a binding site for L-serine.

It belongs to the class-II aminoacyl-tRNA synthetase family. Type-1 seryl-tRNA synthetase subfamily. As to quaternary structure, homodimer. The tRNA molecule binds across the dimer.

It is found in the cytoplasm. The enzyme catalyses tRNA(Ser) + L-serine + ATP = L-seryl-tRNA(Ser) + AMP + diphosphate + H(+). It carries out the reaction tRNA(Sec) + L-serine + ATP = L-seryl-tRNA(Sec) + AMP + diphosphate + H(+). The protein operates within aminoacyl-tRNA biosynthesis; selenocysteinyl-tRNA(Sec) biosynthesis; L-seryl-tRNA(Sec) from L-serine and tRNA(Sec): step 1/1. Catalyzes the attachment of serine to tRNA(Ser). Is also able to aminoacylate tRNA(Sec) with serine, to form the misacylated tRNA L-seryl-tRNA(Sec), which will be further converted into selenocysteinyl-tRNA(Sec). In Ignicoccus hospitalis (strain KIN4/I / DSM 18386 / JCM 14125), this protein is Serine--tRNA ligase.